Here is a 149-residue protein sequence, read N- to C-terminus: Calmodulin (149 aa).

Ala-2 is subject to N-acetylalanine. 4 EF-hand domains span residues 8–43 (EQIA…LGQN), 44–79 (PTEA…KMKD), 81–116 (DSEE…LGEK), and 117–149 (LTDE…MMSK). The Ca(2+) site is built by Asp-21, Asp-23, Asp-25, Thr-27, Glu-32, Asp-57, Asp-59, Asn-61, Thr-63, Glu-68, Asp-94, Asp-96, Asn-98, and Glu-105. The residue at position 116 (Lys-116) is an N6,N6,N6-trimethyllysine. Positions 130, 132, 134, 136, and 141 each coordinate Ca(2+).

This sequence belongs to the calmodulin family.

Its function is as follows. Calmodulin mediates the control of a large number of enzymes, ion channels and other proteins by Ca(2+). Among the enzymes to be stimulated by the calmodulin-Ca(2+) complex are a number of protein kinases and phosphatases. The polypeptide is Calmodulin (cam) (Saccharina japonica (Sweet kelp)).